The primary structure comprises 436 residues: 3-phosphoshikimate 1-carboxyvinyltransferase (436 aa).

The 3-phosphoshikimate site is built by K23, S24, and R28. A phosphoenolpyruvate-binding site is contributed by K23. Phosphoenolpyruvate-binding residues include G97 and R126. Positions 171, 173, 323, and 350 each coordinate 3-phosphoshikimate. Phosphoenolpyruvate is bound at residue Q173. The active-site Proton acceptor is the D323. The phosphoenolpyruvate site is built by R354 and R396.

This sequence belongs to the EPSP synthase family. Monomer.

It localises to the cytoplasm. The catalysed reaction is 3-phosphoshikimate + phosphoenolpyruvate = 5-O-(1-carboxyvinyl)-3-phosphoshikimate + phosphate. It participates in metabolic intermediate biosynthesis; chorismate biosynthesis; chorismate from D-erythrose 4-phosphate and phosphoenolpyruvate: step 6/7. Its function is as follows. Catalyzes the transfer of the enolpyruvyl moiety of phosphoenolpyruvate (PEP) to the 5-hydroxyl of shikimate-3-phosphate (S3P) to produce enolpyruvyl shikimate-3-phosphate and inorganic phosphate. This is 3-phosphoshikimate 1-carboxyvinyltransferase from Prochlorococcus marinus (strain MIT 9301).